The primary structure comprises 764 residues: 5-methyltetrahydropteroyltriglutamate--homocysteine methyltransferase (764 aa).

5-methyltetrahydropteroyltri-L-glutamate is bound by residues 16 to 19 (RELK) and lysine 121. L-homocysteine-binding positions include 440–442 (IGS) and glutamate 493. L-methionine contacts are provided by residues 440 to 442 (IGS) and glutamate 493. Residues 524–525 (RC) and tryptophan 570 contribute to the 5-methyltetrahydropteroyltri-L-glutamate site. Position 608 (aspartate 608) interacts with L-homocysteine. Aspartate 608 contacts L-methionine. Position 614 (glutamate 614) interacts with 5-methyltetrahydropteroyltri-L-glutamate. 3 residues coordinate Zn(2+): histidine 650, cysteine 652, and glutamate 674. The active-site Proton donor is histidine 703. Cysteine 735 provides a ligand contact to Zn(2+).

The protein belongs to the vitamin-B12 independent methionine synthase family. It depends on Zn(2+) as a cofactor.

The enzyme catalyses 5-methyltetrahydropteroyltri-L-glutamate + L-homocysteine = tetrahydropteroyltri-L-glutamate + L-methionine. It functions in the pathway amino-acid biosynthesis; L-methionine biosynthesis via de novo pathway; L-methionine from L-homocysteine (MetE route): step 1/1. Its function is as follows. Catalyzes the transfer of a methyl group from 5-methyltetrahydrofolate to homocysteine resulting in methionine formation. In Burkholderia ambifaria (strain MC40-6), this protein is 5-methyltetrahydropteroyltriglutamate--homocysteine methyltransferase.